The sequence spans 459 residues: MSTAGVAAQDIRVPLKTGFLHNGQALGNMKTCWGSRNEFEKNFLNIDPITMAYNLNSPAPEHLTTLGCASPSAPGSGHFFAERGPSPKSSLPPLVIPPSESSGQREEDQVLCGFKKLSVNGVCASTPPLTPIQSCSSPFPCAAPCDRSSRPLPPLPISEDPSLDEADCEVEFLTSADTDFLLEDCVPSDFKYDVPGRRSFRGCGQINYAYFDSPTVSVADLSCASDQNRVVPDPNPPPPQSHRRLRRSHSGPAGSFNKPAIRISSCTHRASPSSDEDKPEIPPRVPIPPRPAKPDYRRWSAEVTSNTYSDEDRPPKVPPREPLSRSNSRTPSPKSLPSYLNGVMPPTQSFAPDPKYVSSKALQRQSSEGSAKAPCILPIIENGKKVSSTHYYLLPERPPYLDKYEKYFREAEEANPSTQIQPLPAACGMVSATDKLASRMKMDVGGHGKRKHLSYVVSP.

At Ser2 the chain carries N-acetylserine. A phosphothreonine mark is found at Thr126 and Thr130. Residues 227–352 (QNRVVPDPNP…VMPPTQSFAP (126 aa)) form a disordered region. Phosphoserine is present on residues Ser250 and Ser271. The span at 264 to 273 (SSCTHRASPS) shows a compositional bias: polar residues. Pro residues predominate over residues 282–291 (PPRVPIPPRP). Ser300 is modified (phosphoserine). Residues 310–323 (DEDRPPKVPPREPL) show a composition bias toward basic and acidic residues. Positions 324–335 (SRSNSRTPSPKS) are enriched in polar residues. The tract at residues 332-361 (SPKSLPSYLNGVMPPTQSFAPDPKYVSSKA) is interaction with EGFR and ERBB2 and regulation of EGFR activation. Ser458 carries the phosphoserine modification.

This sequence belongs to the MIG6 family. Interacts with EGFR and ERBB2.

It is found in the cytoplasm. Its subcellular location is the cell membrane. The protein localises to the nucleus. Functionally, negative regulator of EGFR signaling in skin morphogenesis. Acts as a negative regulator for several EGFR family members, including ERBB2, ERBB3 and ERBB4. Inhibits EGFR catalytic activity by interfering with its dimerization. Inhibits autophosphorylation of EGFR, ERBB2 and ERBB4. Important for normal keratinocyte proliferation and differentiation. Plays a role in modulating the response to steroid hormones in the uterus. Required for normal response to progesterone in the uterus and for fertility. Mediates epithelial estrogen responses in the uterus by regulating ESR1 levels and activation. Important for regulation of endometrium cell proliferation. Important for normal prenatal and perinatal lung development. This Rattus norvegicus (Rat) protein is ERBB receptor feedback inhibitor 1 (Errfi1).